The sequence spans 184 residues: Endoribonuclease YbeY (184 aa).

Positions 118, 122, and 128 each coordinate Zn(2+).

This sequence belongs to the endoribonuclease YbeY family. The cofactor is Zn(2+).

The protein resides in the cytoplasm. Its function is as follows. Single strand-specific metallo-endoribonuclease involved in late-stage 70S ribosome quality control and in maturation of the 3' terminus of the 16S rRNA. This chain is Endoribonuclease YbeY, found in Nocardia farcinica (strain IFM 10152).